The sequence spans 239 residues: Pathogenesis-related protein 5 (239 aa).

A signal peptide spans 1–23 (MANISSIHILFLVFITSGIAVMA). Cystine bridges form between Cys32-Cys238, Cys79-Cys89, Cys94-Cys99, Cys146-Cys228, Cys151-Cys211, Cys159-Cys174, Cys178-Cys187, and Cys188-Cys198.

The protein belongs to the thaumatin family.

The protein resides in the secreted. Its subcellular location is the extracellular space. The protein localises to the apoplast. Partially responsible for acquired pathogen resistance. This chain is Pathogenesis-related protein 5, found in Arabidopsis thaliana (Mouse-ear cress).